The primary structure comprises 194 residues: Ribosome maturation factor RimM (194 aa).

One can recognise a PRC barrel domain in the interval 113–194; it reads DGEYYWIDLI…RIVADWGLDY (82 aa).

Belongs to the RimM family. In terms of assembly, binds ribosomal protein uS19.

It localises to the cytoplasm. Its function is as follows. An accessory protein needed during the final step in the assembly of 30S ribosomal subunit, possibly for assembly of the head region. Essential for efficient processing of 16S rRNA. May be needed both before and after RbfA during the maturation of 16S rRNA. It has affinity for free ribosomal 30S subunits but not for 70S ribosomes. The protein is Ribosome maturation factor RimM of Leptothrix cholodnii (strain ATCC 51168 / LMG 8142 / SP-6) (Leptothrix discophora (strain SP-6)).